The chain runs to 309 residues: NAD kinase (309 aa).

The active-site Proton acceptor is aspartate 89. NAD(+) is bound by residues 89–90, 163–164, histidine 174, arginine 191, aspartate 193, and 204–209; these read DG, NE, and TAYALS.

The protein belongs to the NAD kinase family. Requires a divalent metal cation as cofactor.

Its subcellular location is the cytoplasm. It carries out the reaction NAD(+) + ATP = ADP + NADP(+) + H(+). Its function is as follows. Involved in the regulation of the intracellular balance of NAD and NADP, and is a key enzyme in the biosynthesis of NADP. Catalyzes specifically the phosphorylation on 2'-hydroxyl of the adenosine moiety of NAD to yield NADP. The chain is NAD kinase from Shewanella sp. (strain MR-4).